The primary structure comprises 386 residues: Glycerate dehydrogenase HPR, peroxisomal (386 aa).

NAD(+) contacts are provided by residues 175–176, 271–273, and aspartate 297; these read RI and CSR. Arginine 273 is a catalytic residue. Residue glutamate 302 is part of the active site. The Proton donor role is filled by histidine 320. NAD(+) is bound at residue 320–323; the sequence is HIAS. The short motif at 384–386 is the Microbody targeting signal element; that stretch reads SKL.

The protein belongs to the D-isomer specific 2-hydroxyacid dehydrogenase family. As to expression, present in leaves (at protein level). Mostly expressed in photosynthetic tissues such as leaves, stems, flowers, buds, and, to a lower extent, in siliques and roots.

It localises to the peroxisome. The enzyme catalyses (R)-glycerate + NAD(+) = 3-hydroxypyruvate + NADH + H(+). The protein operates within photosynthesis; photorespiration; 3-phospho-D-glycerate from glycine: step 3/4. Slightly inhibited by oxalate. Functionally, catalyzes the NADH-dependent reduction of hydroxypyruvate into glycerate in the photorespiratory core cycle. Mediates fatty acid beta-oxidation in germinating seeds when malate dehydrogenase is absent. The sequence is that of Glycerate dehydrogenase HPR, peroxisomal (HPR) from Arabidopsis thaliana (Mouse-ear cress).